Consider the following 181-residue polypeptide: Large ribosomal subunit protein bL17 (181 aa).

Low complexity predominate over residues 141 to 159 (KAASATAESAPVATANDAA). The interval 141–181 (KAASATAESAPVATANDAAPAEEAEVQGVKDPAEDCEAKAD) is disordered. The segment covering 171 to 181 (DPAEDCEAKAD) has biased composition (basic and acidic residues).

It belongs to the bacterial ribosomal protein bL17 family. In terms of assembly, part of the 50S ribosomal subunit. Contacts protein L32.

The sequence is that of Large ribosomal subunit protein bL17 from Geotalea daltonii (strain DSM 22248 / JCM 15807 / FRC-32) (Geobacter daltonii).